Here is a 438-residue protein sequence, read N- to C-terminus: Ribosome biogenesis protein NOP53 (438 aa).

Disordered stretches follow at residues 1 to 23 (MVAG…WRKG) and 247 to 346 (HPKY…RKKE). The span at 12–21 (GSRHNKKYWR) shows a compositional bias: basic residues. Basic and acidic residues-rich tracts occupy residues 265 to 288 (KSMK…MTKE), 297 to 318 (QKLD…DSHN), and 325 to 346 (LHKE…RKKE).

The protein belongs to the NOP53 family.

The protein localises to the nucleus. Its subcellular location is the nucleolus. The protein resides in the nucleoplasm. Its function is as follows. May play a role in ribosome biogenesis, being required for integration of the 5S RNP into the ribosomal large subunit. This chain is Ribosome biogenesis protein NOP53, found in Caenorhabditis elegans.